A 258-amino-acid polypeptide reads, in one-letter code: Imidazole glycerol phosphate synthase subunit HisF (258 aa).

Catalysis depends on residues aspartate 11 and aspartate 130.

It belongs to the HisA/HisF family. As to quaternary structure, heterodimer of HisH and HisF.

It localises to the cytoplasm. The enzyme catalyses 5-[(5-phospho-1-deoxy-D-ribulos-1-ylimino)methylamino]-1-(5-phospho-beta-D-ribosyl)imidazole-4-carboxamide + L-glutamine = D-erythro-1-(imidazol-4-yl)glycerol 3-phosphate + 5-amino-1-(5-phospho-beta-D-ribosyl)imidazole-4-carboxamide + L-glutamate + H(+). Its pathway is amino-acid biosynthesis; L-histidine biosynthesis; L-histidine from 5-phospho-alpha-D-ribose 1-diphosphate: step 5/9. In terms of biological role, IGPS catalyzes the conversion of PRFAR and glutamine to IGP, AICAR and glutamate. The HisF subunit catalyzes the cyclization activity that produces IGP and AICAR from PRFAR using the ammonia provided by the HisH subunit. This chain is Imidazole glycerol phosphate synthase subunit HisF, found in Azorhizobium caulinodans (strain ATCC 43989 / DSM 5975 / JCM 20966 / LMG 6465 / NBRC 14845 / NCIMB 13405 / ORS 571).